A 316-amino-acid chain; its full sequence is Retron Ec73 putative ribosyltransferase/DNA-binding protein (316 aa).

Possible ribosyltransferase/DNA-binding component of antiviral defense system retron Ec73, composed of a non-coding RNA (ncRNA) followed by this protein then a reverse transcriptase (RT). Expression of this retron confers protection against bacteriophages SECphi4, SECphi6, SECphi27 and P1. At multiplicity of infection (MOI) of 0.02 cultures grow normally when infected with SECphi4 without collapsing, at MOI 2 cultures enter growth stasis. In Escherichia coli, this protein is Retron Ec73 putative ribosyltransferase/DNA-binding protein.